The sequence spans 400 residues: Argininosuccinate synthase (400 aa).

ATP contacts are provided by residues 10–18 (AYSGGVDTS) and Ala-38. L-citrulline is bound at residue Tyr-89. Position 119 (Gly-119) interacts with ATP. Thr-121, Asn-125, and Asp-126 together coordinate L-aspartate. Position 125 (Asn-125) interacts with L-citrulline. 5 residues coordinate L-citrulline: Arg-129, Ser-177, Ser-186, Glu-262, and Tyr-274.

This sequence belongs to the argininosuccinate synthase family. Type 1 subfamily. As to quaternary structure, homotetramer.

The protein localises to the cytoplasm. It carries out the reaction L-citrulline + L-aspartate + ATP = 2-(N(omega)-L-arginino)succinate + AMP + diphosphate + H(+). It participates in amino-acid biosynthesis; L-arginine biosynthesis; L-arginine from L-ornithine and carbamoyl phosphate: step 2/3. This chain is Argininosuccinate synthase, found in Trichormus variabilis (strain ATCC 29413 / PCC 7937) (Anabaena variabilis).